The sequence spans 233 residues: MGSPRSALSCLLLHLLVLCLQAQEGPGRGPALGRELASLFRAGREPQGVSQQHVREQSLVTDQLSRRLIRTYQLYSRTSGKHVQVLANKRINAMAEDGDPFAKLIVETDTFGSRVRVRGAETGLYICMNKKGKLIAKSNGKGKDCVFTEIVLENNYTALQNAKYEGWYMAFTRKGRPRKGSKTRQHQREVHFMKRLPRGHHTTEQSLRFEFLNYPPFTRSLRGSQRTWAPEPR.

The first 22 residues, 1 to 22, serve as a signal peptide directing secretion; it reads MGSPRSALSCLLLHLLVLCLQA. N-linked (GlcNAc...) asparagine glycosylation occurs at Asn155.

It belongs to the heparin-binding growth factors family. In terms of assembly, monomer. Homodimer. Interacts with FGFR1, FGFR2, FGFR3 and FGFR4. Affinity between fibroblast growth factors (FGFs) and their receptors is increased by heparan sulfate glycosaminoglycans that function as coreceptors.

Its subcellular location is the secreted. Plays an important role in the regulation of embryonic development, cell proliferation, cell differentiation and cell migration. Required for normal brain, eye, ear and limb development during embryogenesis. Required for normal development of the gonadotropin-releasing hormone (GnRH) neuronal system. Plays a role in neurite outgrowth in hippocampal cells. The protein is Fibroblast growth factor 8 (FGF8) of Homo sapiens (Human).